Here is a 441-residue protein sequence, read N- to C-terminus: Transcriptional regulatory protein ZraR (441 aa).

Residues 7–121 (DILVVDDDIS…NLQATLEKAL (115 aa)) enclose the Response regulatory domain. Residue D56 is modified to 4-aspartylphosphate. Positions 141 to 370 (MVGKSPAMQH…LENAVERAVV (230 aa)) constitute a Sigma-54 factor interaction domain. The ATP site is built by G172, T173, R329, and R359. The segment at residues 421–440 (KTEAARQLGITRKTLLAKLS) is a DNA-binding region (H-T-H motif).

As to quaternary structure, monomer. In terms of processing, phosphorylated by ZraS.

The protein resides in the cytoplasm. Its activity is regulated as follows. Activity of the ZraS/ZraR two-component system is repressed by the zinc-bound form of ZraP, which probably interacts with the periplasmic region of ZraS. Part of the Zra signaling pathway, an envelope stress response (ESR) system composed of the periplasmic accessory protein ZraP, the histidine kinase ZraS and the transcriptional regulator ZraR. The ZraPSR system contributes to antibiotic resistance and is important for membrane integrity in the presence of membrane-targeting biocides. ZraR is a member of the two-component regulatory system ZraS/ZraR. When activated by ZraS, acts in conjunction with sigma-54 to regulate the expression of zraP in the presence of high Zn(2+) or Pb(2+) concentrations. Also positively autoregulates the expression of the zraSR operon. Binds to a region within the zraP-zraSR intergenic region that is characterized by two inverted repeats separated by a 14 bp spacer. In addition, controls a regulon of genes of diverse functions that may be critical to maintain envelope integrity and cell survival under stressful conditions. The system has no direct role in zinc or copper resistance. This Escherichia coli (strain K12) protein is Transcriptional regulatory protein ZraR.